The sequence spans 579 residues: MRKFDQQQIEQILKKRFFITQSAYIYGGVSGLYDLGPPGLSIKTNILSLWRKHFVLEEDMLEIETTTMLPHDVLKASGHVDKFCDILVFDEVSGDCFRADHLVGDALEKMSPTEEISKELQKVDCMSCQEIDEIISKYNIRSTLGNKLSKSQQFNLMFGTQIGYKGGQTMFLRPETAQGQFLNFKKLCEYNNDKLPFASASIGKAYRNEISPRSGLLRVREFDQAEIEHFVLTDEKDHPKFSTVQGIKLKLMHHDASEEITLKEAIERGIVCNETMGYYIGRTALFLIELGIDRELLRFRQHKKDEMAHYAKGCWDAEIYTSYGWIECVGIADRACYDLSCHEDGSKVDLRCKRRLAEPKEIEEWVLKLDKKEWGAKLRDRFSVLMETVNGLSQKYIEKNVVSIGENRNRLSVKFDEYTINIECSRVKKKVFVENVIPDVIEPSFGIGRILYALIEHSFYLREDSRPVFRFKPAIAPVQCAIGYLIHFDEFNEHILNIKRFLTDNGLVVHVNERSCSIGRKYSSCDELGIPFFITFDPDFLKDRMVTIRERDSMQQIRVDVEKCPSIVLEYIRGQSRWN.

Position 175 (glutamate 175) interacts with glycine. ATP contacts are provided by residues arginine 207–glutamate 209 and arginine 218–valine 219. Glutamate 226 lines the glycine pocket. Glutamate 327–cysteine 328 is an ATP binding site. Glutamate 442–serine 444 lines the glycine pocket. Arginine 449 lines the ATP pocket.

Belongs to the class-II aminoacyl-tRNA synthetase family. In terms of assembly, homodimer.

It carries out the reaction tRNA(Gly) + glycine + ATP = glycyl-tRNA(Gly) + AMP + diphosphate. The catalysed reaction is 2 ATP + H(+) = P(1),P(4)-bis(5'-adenosyl) tetraphosphate + diphosphate. In terms of biological role, catalyzes the ATP-dependent ligation of glycine to the 3'-end of its cognate tRNA, via the formation of an aminoacyl-adenylate intermediate (Gly-AMP). Also produces diadenosine tetraphosphate (Ap4A), a universal pleiotropic signaling molecule needed for cell regulation pathways, by direct condensation of 2 ATPs. Thereby, may play a special role in Ap4A homeostasis. The chain is Glycine--tRNA ligase from Encephalitozoon cuniculi (strain GB-M1) (Microsporidian parasite).